Consider the following 54-residue polypeptide: U-reduvitoxin-Pr1a (54 aa).

The N-terminal stretch at 1-19 is a signal peptide; that stretch reads MKLLGLLLLVFTFMALAFA. Intrachain disulfides connect C24-C39, C31-C44, and C38-C51.

It belongs to the venom Ptu1-like knottin family. As to expression, expressed by the venom gland (posterior main gland) (at protein level).

The protein localises to the secreted. Functionally, binds reversibly and blocks P/Q-type voltage-gated calcium channels (Cav). The sequence is that of U-reduvitoxin-Pr1a from Platymeris rhadamanthus (Red spot assassin bug).